Reading from the N-terminus, the 600-residue chain is NADH-quinone oxidoreductase subunit C/D (600 aa).

Residues 1–190 (MIDLMPKKNT…EPFFLNEQKE (190 aa)) form an NADH dehydrogenase I subunit C region. Residues 214 to 600 (EFMFLNLGPN…IDFVMSDVDR (387 aa)) are NADH dehydrogenase I subunit D.

The protein in the N-terminal section; belongs to the complex I 30 kDa subunit family. In the C-terminal section; belongs to the complex I 49 kDa subunit family. In terms of assembly, NDH-1 is composed of 13 different subunits. Subunits NuoB, CD, E, F, and G constitute the peripheral sector of the complex.

Its subcellular location is the cell membrane. It catalyses the reaction a quinone + NADH + 5 H(+)(in) = a quinol + NAD(+) + 4 H(+)(out). NDH-1 shuttles electrons from NADH, via FMN and iron-sulfur (Fe-S) centers, to quinones in the respiratory chain. The immediate electron acceptor for the enzyme in this species is believed to be ubiquinone. Couples the redox reaction to proton translocation (for every two electrons transferred, four hydrogen ions are translocated across the cytoplasmic membrane), and thus conserves the redox energy in a proton gradient. In Buchnera aphidicola subsp. Acyrthosiphon pisum (strain 5A), this protein is NADH-quinone oxidoreductase subunit C/D.